We begin with the raw amino-acid sequence, 312 residues long: Malate dehydrogenase (312 aa).

NAD(+) is bound by residues 12-17 (GAGFTG) and D36. Substrate contacts are provided by R87 and R93. Residues N100 and 123-125 (LTN) each bind NAD(+). N125 provides a ligand contact to substrate. Phosphoserine is present on S149. R156 lines the substrate pocket. The Proton acceptor role is filled by H180.

This sequence belongs to the LDH/MDH superfamily. MDH type 3 family.

It catalyses the reaction (S)-malate + NAD(+) = oxaloacetate + NADH + H(+). Catalyzes the reversible oxidation of malate to oxaloacetate. The polypeptide is Malate dehydrogenase (Geobacillus thermodenitrificans (strain NG80-2)).